An 880-amino-acid polypeptide reads, in one-letter code: Valine--tRNA ligase (880 aa).

A 'HIGH' region motif is present at residues 49-59; that stretch reads PNVTGKLHLGH. The short motif at 525 to 529 is the 'KMSKS' region element; sequence KMSKS. ATP is bound at residue lysine 528. Residues 809-880 adopt a coiled-coil conformation; that stretch reads LEGLINIEEE…VKARLAELKR (72 aa).

Belongs to the class-I aminoacyl-tRNA synthetase family. ValS type 1 subfamily. Monomer.

The protein localises to the cytoplasm. The catalysed reaction is tRNA(Val) + L-valine + ATP = L-valyl-tRNA(Val) + AMP + diphosphate. Its function is as follows. Catalyzes the attachment of valine to tRNA(Val). As ValRS can inadvertently accommodate and process structurally similar amino acids such as threonine, to avoid such errors, it has a 'posttransfer' editing activity that hydrolyzes mischarged Thr-tRNA(Val) in a tRNA-dependent manner. The chain is Valine--tRNA ligase (valS) from Geobacillus stearothermophilus (Bacillus stearothermophilus).